Consider the following 285-residue polypeptide: SLAM family member 8 (285 aa).

Positions 1-22 (MVMRPLWSLLLWEALLPITVTG) are cleaved as a signal peptide. Over 23–233 (AQVLSKVGGS…AAPGKASYKD (211 aa)) the chain is Extracellular. Residue Asn85 is glycosylated (N-linked (GlcNAc...) asparagine). One can recognise an Ig-like C2-type domain in the interval 128-215 (PVVQVFIAVE…PVSWDLATVT (88 aa)). A disulfide bridge connects residues Cys152 and Cys201. The chain crosses the membrane as a helical span at residues 234–254 (VLLVVVPVSLLLMLVTLFSAW). At 255–285 (HWCPCSGKKKKDVHADRVGPETENPLVQDLP) the chain is on the cytoplasmic side. A disordered region spans residues 262 to 285 (KKKKDVHADRVGPETENPLVQDLP).

In terms of tissue distribution, expressed in lymph node, spleen, thymus and bone marrow.

The protein resides in the membrane. Its function is as follows. May play a role in B-lineage commitment and/or modulation of signaling through the B-cell receptor. The protein is SLAM family member 8 (SLAMF8) of Homo sapiens (Human).